Here is a 433-residue protein sequence, read N- to C-terminus: MKTFVEIVDVYARQILDSRGNPTVEVEVELEDGTVGRAAVPSGASTGIFEAVELRDNDKSRYMGKSVEKAVENVNEIIAEELVGLNVFDQVALDKIMIELDGTDNKGKLGANAMLGVSLACARAAAEYLGISLYQYIGGVNAKVLPVPMMNIMNGGSHADNNVDLQEFMIMPAGAKSFSHALRMCAEIYHTLKNILKDKGLSTGVGDEGGFAPNLESNEEAIQVIIEAVEKAGYKPGEEVFIALDPASSEFFNTETNKYELKGEGRELTPAEMVEYYAKLVEKYPIISIEDGMAEEDWDGWKLMTEKLGGKIQLVGDDLFVTNTKRLSMGIERKVANSILIKLNQIGTLTETLNTIEMAERAGYTAVVSHRSGETEDTTIADLVVAVNAGQIKTGAPARTERVAKYNQLLRIEEELNAMGEYRGLKAFYNIRK.

Position 166 (Gln-166) interacts with (2R)-2-phosphoglycerate. Glu-208 functions as the Proton donor in the catalytic mechanism. The Mg(2+) site is built by Asp-245, Glu-290, and Asp-317. Positions 342, 371, 372, and 393 each coordinate (2R)-2-phosphoglycerate. The active-site Proton acceptor is the Lys-342.

It belongs to the enolase family. The cofactor is Mg(2+).

It is found in the cytoplasm. The protein resides in the secreted. The protein localises to the cell surface. It carries out the reaction (2R)-2-phosphoglycerate = phosphoenolpyruvate + H2O. It participates in carbohydrate degradation; glycolysis; pyruvate from D-glyceraldehyde 3-phosphate: step 4/5. Its function is as follows. Catalyzes the reversible conversion of 2-phosphoglycerate (2-PG) into phosphoenolpyruvate (PEP). It is essential for the degradation of carbohydrates via glycolysis. The protein is Enolase of Clostridium novyi (strain NT).